Consider the following 341-residue polypeptide: Cathepsin B-like cysteine proteinase 1 (341 aa).

The first 19 residues, 1 to 19, serve as a signal peptide directing secretion; sequence MKYLFFALCLYLYQGISEA. The propeptide at 20-88 is activation peptide; it reads EVPAEQIPLE…VEDEELEENN (69 aa). The N-linked (GlcNAc...) asparagine glycan is linked to asparagine 103. 6 disulfides stabilise this stretch: cysteine 104–cysteine 133, cysteine 116–cysteine 160, cysteine 152–cysteine 218, cysteine 153–cysteine 156, cysteine 189–cysteine 222, and cysteine 197–cysteine 209. Cysteine 119 is a catalytic residue. N-linked (GlcNAc...) asparagine glycosylation occurs at asparagine 202. Catalysis depends on residues histidine 288 and asparagine 308.

It belongs to the peptidase C1 family.

Its function is as follows. Expression of the protease correlates with blood-feeding and suggests a role for the protease in blood digestion. This is Cathepsin B-like cysteine proteinase 1 (CP-1) from Ostertagia ostertagi (Brown stomach worm).